The sequence spans 721 residues: Fatty acid oxidation complex subunit alpha (721 aa).

The enoyl-CoA hydratase/isomerase stretch occupies residues 1–190; it reads MIYEGKAITV…KVGAVDAVVA (190 aa). Residue aspartate 297 participates in substrate binding. The 3-hydroxyacyl-CoA dehydrogenase stretch occupies residues 312 to 721; that stretch reads KDVKQAAVLG…SFFGQASSEE (410 aa). NAD(+)-binding positions include methionine 325, aspartate 344, 401–403, lysine 408, and serine 430; that span reads VVE. Histidine 451 serves as the catalytic For 3-hydroxyacyl-CoA dehydrogenase activity. Asparagine 454 contacts NAD(+). Residues asparagine 501 and tyrosine 660 each coordinate substrate.

In the N-terminal section; belongs to the enoyl-CoA hydratase/isomerase family. The protein in the C-terminal section; belongs to the 3-hydroxyacyl-CoA dehydrogenase family. In terms of assembly, heterotetramer of two alpha chains (FadB) and two beta chains (FadA).

It carries out the reaction a (3S)-3-hydroxyacyl-CoA + NAD(+) = a 3-oxoacyl-CoA + NADH + H(+). The catalysed reaction is a (3S)-3-hydroxyacyl-CoA = a (2E)-enoyl-CoA + H2O. The enzyme catalyses a 4-saturated-(3S)-3-hydroxyacyl-CoA = a (3E)-enoyl-CoA + H2O. It catalyses the reaction (3S)-3-hydroxybutanoyl-CoA = (3R)-3-hydroxybutanoyl-CoA. It carries out the reaction a (3Z)-enoyl-CoA = a 4-saturated (2E)-enoyl-CoA. The catalysed reaction is a (3E)-enoyl-CoA = a 4-saturated (2E)-enoyl-CoA. The protein operates within lipid metabolism; fatty acid beta-oxidation. Involved in the aerobic and anaerobic degradation of long-chain fatty acids via beta-oxidation cycle. Catalyzes the formation of 3-oxoacyl-CoA from enoyl-CoA via L-3-hydroxyacyl-CoA. It can also use D-3-hydroxyacyl-CoA and cis-3-enoyl-CoA as substrate. This Pseudomonas syringae pv. syringae (strain B728a) protein is Fatty acid oxidation complex subunit alpha.